We begin with the raw amino-acid sequence, 202 residues long: Recombination protein RecR (202 aa).

The segment at 56–71 (CVVCGTVSDKEHCRIC) adopts a C4-type zinc-finger fold. In terms of domain architecture, Toprim spans 79–179 (TVICVVEEPK…TVSRLASGLP (101 aa)).

Belongs to the RecR family.

In terms of biological role, may play a role in DNA repair. It seems to be involved in an RecBC-independent recombinational process of DNA repair. It may act with RecF and RecO. In Rhodococcus jostii (strain RHA1), this protein is Recombination protein RecR.